A 493-amino-acid chain; its full sequence is Dipeptide and tripeptide permease B (493 aa).

The Cytoplasmic portion of the chain corresponds to 1–27 (MERSTPTGLLQQPKPFFMIFFVELWER). A helical membrane pass occupies residues 28–48 (FGYYGVQGILAVFFVQQLGFS). Residues 49 to 52 (QEQA) are Periplasmic-facing. A helical membrane pass occupies residues 53–73 (FVTFGAFAALVYGLISIGGYV). The Cytoplasmic portion of the chain corresponds to 74-82 (GDHLLGTKR). The helical transmembrane segment at 83–103 (TMVLGAVVLAAGYFATGLSLY) threads the bilayer. Topologically, residues 104–106 (QPN) are periplasmic. Residues 107 to 127 (LIFFALGTIAVGNGLFKANPA) form a helical membrane-spanning segment. The Cytoplasmic segment spans residues 128–146 (SLLSKCYPPKDPRLDGAFT). A helical transmembrane segment spans residues 147–167 (LFYMSINIGSLLSLSLAPVIA). At 168 to 169 (ER) the chain is on the periplasmic side. Residues 170–190 (FGYTVTYYLCGIGLIFALLVY) traverse the membrane as a helical segment. Residues 191 to 212 (FCCRHMVRHIGSEPDTKPLNWR) are Cytoplasmic-facing. Helical transmembrane passes span 213–233 (NLLL…WLMN) and 234–254 (HVFI…FIFF). At 255-267 (REASKQDRLGRNK) the chain is on the cytoplasmic side. A helical membrane pass occupies residues 268–288 (MFVAFILMIEAIVFYVLYAQM). Over 289-311 (PTSLNFFAINNVHHEILGFSINP) the chain is Periplasmic. Residues 312-332 (VSFQALNPFWVVVASPILASI) form a helical membrane-spanning segment. The Cytoplasmic segment spans residues 333–350 (YTRLGSQNRDLSMPAKFT). The chain crosses the membrane as a helical span at residues 351–371 (LGMFLCSLGFLTAAAAGMWFA). Residues 372–379 (DAQGLTSP) are Periplasmic-facing. A helical transmembrane segment spans residues 380–400 (WFIVLVYLFQSLGELMISALG). Residues 401 to 424 (LAMVAALVPQYLMGFILGMWFLTQ) are Cytoplasmic-facing. A helical membrane pass occupies residues 425–445 (AASFLIGGYVATFTATPEGMT). The Periplasmic segment spans residues 446-456 (DPLETLPIYTD). Residues 457 to 477 (VFGKIGMVTLVIALVMALLIP) traverse the membrane as a helical segment. At 478 to 493 (WLNRMINSSAAEDAVA) the chain is on the cytoplasmic side.

Belongs to the major facilitator superfamily. Proton-dependent oligopeptide transporter (POT/PTR) (TC 2.A.17) family. DtpB subfamily.

Its subcellular location is the cell inner membrane. Its function is as follows. Proton-dependent permease that transports di- and tripeptides. This Yersinia enterocolitica serotype O:8 / biotype 1B (strain NCTC 13174 / 8081) protein is Dipeptide and tripeptide permease B.